The following is a 546-amino-acid chain: Cysteine--tRNA ligase (546 aa).

Cys-57 provides a ligand contact to Zn(2+). The 'HIGH' region signature appears at 59–69 (ATVQSSPHIGH). Residues 211–236 (PSVDATGADKYNPVDPADASPDKHDP) are disordered. Zn(2+)-binding residues include Cys-270, His-295, and Glu-299. The short motif at 326–330 (KMSKS) is the 'KMSKS' region element. Lys-329 lines the ATP pocket.

The protein belongs to the class-I aminoacyl-tRNA synthetase family. In terms of assembly, monomer. Zn(2+) serves as cofactor.

The protein localises to the cytoplasm. The catalysed reaction is tRNA(Cys) + L-cysteine + ATP = L-cysteinyl-tRNA(Cys) + AMP + diphosphate. The chain is Cysteine--tRNA ligase from Bifidobacterium longum (strain NCC 2705).